The primary structure comprises 230 residues: Small ribosomal subunit protein uS3 (230 aa).

Residues 39–107 (VRKFLVEKLQ…PAQINIAEIR (69 aa)) form the KH type-2 domain.

The protein belongs to the universal ribosomal protein uS3 family. In terms of assembly, part of the 30S ribosomal subunit. Forms a tight complex with proteins S10 and S14.

Binds the lower part of the 30S subunit head. Binds mRNA in the 70S ribosome, positioning it for translation. This is Small ribosomal subunit protein uS3 from Shewanella putrefaciens (strain CN-32 / ATCC BAA-453).